Here is a 309-residue protein sequence, read N- to C-terminus: General transcription factor IIH subunit 3 (309 aa).

A C4-type zinc finger spans residues Cys-269 to Cys-286.

The protein belongs to the TFB4 family. As to quaternary structure, part of a TFIID-containing RNA polymerase II pre-initiation complex that is composed of TBP and at least GTF2A1, GTF2A2, GTF2E1, GTF2E2, GTF2F1, GTF2H2, GTF2H3, GTF2H4, GTF2H5, GTF2B, TCEA1, ERCC2, ERCC3, TAF1, TAF2, TAF3, TAF4, TAF5, TAF6, TAF7, TAF8, TAF9, TAF10, TAF11, TAF12 and TAF13. Component of the 7-subunit TFIIH core complex composed of XPB/ERCC3, XPD/ERCC2, GTF2H1, GTF2H2, GTF2H3, GTF2H4 and GTF2H5, which is active in NER. The core complex associates with the 3-subunit CDK-activating kinase (CAK) module composed of CCNH/cyclin H, CDK7 and MNAT1 to form the 10-subunit holoenzyme (holo-TFIIH) active in transcription. Interacts with RARA; the interaction requires prior phosphorylation of RARA on 'Ser-369' which then enhances interaction of RARA with CDK7.

It is found in the nucleus. Its function is as follows. Component of the general transcription and DNA repair factor IIH (TFIIH) core complex, which is involved in general and transcription-coupled nucleotide excision repair (NER) of damaged DNA and, when complexed to CAK, in RNA transcription by RNA polymerase II. In NER, TFIIH acts by opening DNA around the lesion to allow the excision of the damaged oligonucleotide and its replacement by a new DNA fragment. In transcription, TFIIH has an essential role in transcription initiation. When the pre-initiation complex (PIC) has been established, TFIIH is required for promoter opening and promoter escape. Phosphorylation of the C-terminal tail (CTD) of the largest subunit of RNA polymerase II by the kinase module CAK controls the initiation of transcription. The protein is General transcription factor IIH subunit 3 (Gtf2h3) of Mus musculus (Mouse).